Reading from the N-terminus, the 1666-residue chain is Latent-transforming growth factor beta-binding protein 4 (1666 aa).

A signal peptide spans 1 to 24 (MRRPGLGGPCPLLLLLLLPAATSA). One can recognise an EGF-like 1 domain in the interval 148-180 (ARVLCPLICHNGGVCVKPDRCLCPPDFAGKFCQ). 6 disulfide bridges follow: C152–C162, C156–C168, C170–C179, C288–C310, C297–C323, and C311–C326. In terms of domain architecture, TB 1 spans 286 to 338 (GYCFRELRGSECASPLPGLRTQEVCCRGEGLAWGVHDCHPCAEHLRNSNQVSG). N-linked (GlcNAc...) asparagine glycosylation is present at N351. The EGF-like 2; calcium-binding domain maps to 356–396 (DVDECATGGRCQHGECANTRGGYTCVCPDGFLLDSSRSSCI). Intrachain disulfides connect C360–C371, C366–C380, C382–C395, C408–C430, C417–C443, C431–C446, and C432–C458. In terms of domain architecture, TB 2 spans 406–458 (GPCYRVLHDGGCSLPILRNITKQICCCSRVGKAWGRGCQLCPPYGSEGFREIC). N424 carries an N-linked (GlcNAc...) asparagine glycan. The disordered stretch occupies residues 473-590 (YNTRPLNQDP…EIPESGPSSS (118 aa)). Residues 491–502 (RVPPATPRPPTG) are compositionally biased toward pro residues. The segment covering 521 to 561 (PRPRPEPRPRPESRPRPEPRPRPEPRPQPESQPRPESRPRP) has biased composition (basic and acidic residues). Residues 562–573 (ESQPWPEFPLPS) are compositionally biased toward pro residues. Positions 579 to 590 (GPEIPESGPSSS) are enriched in low complexity. Residues 588 to 629 (SSSMCQRNPQVCGPGRCVPRPSGYTCACDPGFRLGPQGTRCI) form the EGF-like 3 domain. Disulfide bonds link C592–C604, C599–C613, C615–C628, C634–C646, C641–C655, C657–C670, C676–C688, C683–C697, C699–C712, C718–C730, C725–C739, C741–C750, C757–C769, C764–C778, C780–C793, C799–C811, C806–C820, C822–C835, C881–C893, C887–C902, C904–C918, C924–C936, C930–C945, C947–C960, C966–C977, C972–C986, C988–C1001, C1095–C1107, C1101–C1116, and C1118–C1131. The 42-residue stretch at 630-671 (DIDECRRVPTPCAPGRCENTPGSFRCVCGTGFQAGPRATECL) folds into the EGF-like 4; calcium-binding domain. The EGF-like 5; calcium-binding domain maps to 672–713 (DVDECRRVPPPCDRGRCENTPGSFLCVCPAGYQAAPHGASCQ). One can recognise an EGF-like 6; calcium-binding domain in the interval 714–751 (DVDECTQSPGLCGRGVCENLPGSFRCVCPAGFRGSACE). The EGF-like 7; calcium-binding domain occupies 753-794 (DVDECAQQPPPCGPGRCDNTAGSFHCACPAGFRSRGPGAPCQ). Residues 795–836 (DVDECSRSPSPCAYGRCENTEGSFKCVCPTGFQPNAAGSECE) form the EGF-like 8; calcium-binding domain. The EGF-like 9; calcium-binding domain maps to 877–919 (DVDECSSGTPCGLHGQCTNTKGSFHCSCSTGYRAPSGQPGPCA). In terms of domain architecture, EGF-like 10; calcium-binding spans 920–961 (DINECLEGDFCFPHGECLNTDGSFTCTCAPGYRPGPRGASCL). An EGF-like 11; calcium-binding domain is found at 962 to 1002 (DVDECSEEDLCQSGICTNTDGSFECICPPGHRAGPDLASCL). The region spanning 1091-1132 (DVDECRNRSFCGAHAMCQNLPGSFQCVCDQGYEGARDGRHCV) is the EGF-like 12; calcium-binding domain. N1097 is a glycosylation site (N-linked (GlcNAc...) asparagine). A disordered region spans residues 1171-1221 (TGRCVPPRAPAGTFPGSQPQAPASPSLPARPPAPPPPRRPSPPRQGPVSSG). Residues 1185–1197 (PGSQPQAPASPSL) are compositionally biased toward low complexity. The span at 1198–1215 (PARPPAPPPPRRPSPPRQ) shows a compositional bias: pro residues. The TB 3 domain maps to 1223–1277 (RECYFDTAAPDACDNILARNVTWQECCCTVGEGWGSGCRIQQCPGTETAEYQSLC). Disulfide bonds link C1225/C1248, C1235/C1260, C1249/C1265, C1250/C1277, C1299/C1312, C1307/C1321, C1323/C1336, C1342/C1354, C1349/C1363, and C1365/C1378. N1242 is a glycosylation site (N-linked (GlcNAc...) asparagine). Residues 1295–1337 (DVDECQLFQDQVCKSGVCVNTAPGYSCYCSNGFYYHAHRLECV) enclose the EGF-like 13; calcium-binding domain. The region spanning 1338–1379 (DNDECADEEPACEGGRCVNTVGSYHCTCEPPLVLDGSRRRCV) is the EGF-like 14; calcium-binding domain. An N-linked (GlcNAc...) asparagine glycan is attached at N1381. The 54-residue stretch at 1391–1444 (GVCWQEVGPDLVCSRPRLDRQATYTECCCLYGEAWGMDCALCPAQDSDDFEALC) folds into the TB 4 domain. Intrachain disulfides connect C1393-C1417, C1403-C1429, C1418-C1432, and C1419-C1444. Pro residues predominate over residues 1488 to 1500 (VLPYDPYPPPPGP). A disordered region spans residues 1488–1566 (VLPYDPYPPP…SSERGSYTGA (79 aa)). A Phosphothreonine modification is found at T1564. EGF-like domains lie at 1575–1615 (EAEE…MSCV) and 1616–1660 (DVNE…HHCA). 6 disulfide bridges follow: C1579–C1590, C1585–C1599, C1601–C1614, C1620–C1635, C1630–C1644, and C1646–C1659.

It belongs to the LTBP family. Forms part of the large latent transforming growth factor beta precursor complex; removal is essential for activation of complex. Interacts with LTBP1 and TGFB1. Interacts with EFEMP2; this interaction promotes fibrillar deposition of EFEMP2. Post-translationally, contains hydroxylated asparagine residues.

The protein resides in the secreted. It is found in the extracellular space. The protein localises to the extracellular matrix. Key regulator of transforming growth factor beta (TGFB1, TGFB2 and TGFB3) that controls TGF-beta activation by maintaining it in a latent state during storage in extracellular space. Associates specifically via disulfide bonds with the Latency-associated peptide (LAP), which is the regulatory chain of TGF-beta, and regulates integrin-dependent activation of TGF-beta. The protein is Latent-transforming growth factor beta-binding protein 4 (Ltbp4) of Mus musculus (Mouse).